Reading from the N-terminus, the 373-residue chain is Chaperone protein DnaJ (373 aa).

The region spanning 5-69 (DYYEVLGVNK…NKRVNYDQFG (65 aa)) is the J domain. The CR-type zinc finger occupies 130 to 212 (GTKKEISIKK…CKGKGTENKT (83 aa)). The Zn(2+) site is built by Cys143, Cys146, Cys160, Cys163, Cys186, Cys189, Cys200, and Cys203. CXXCXGXG motif repeat units lie at residues 143-150 (CHTCNGDG), 160-167 (CSYCNGAG), 186-193 (CPKCEGSG), and 200-207 (CPTCKGKG).

Belongs to the DnaJ family. In terms of assembly, homodimer. The cofactor is Zn(2+).

It localises to the cytoplasm. Participates actively in the response to hyperosmotic and heat shock by preventing the aggregation of stress-denatured proteins and by disaggregating proteins, also in an autonomous, DnaK-independent fashion. Unfolded proteins bind initially to DnaJ; upon interaction with the DnaJ-bound protein, DnaK hydrolyzes its bound ATP, resulting in the formation of a stable complex. GrpE releases ADP from DnaK; ATP binding to DnaK triggers the release of the substrate protein, thus completing the reaction cycle. Several rounds of ATP-dependent interactions between DnaJ, DnaK and GrpE are required for fully efficient folding. Also involved, together with DnaK and GrpE, in the DNA replication of plasmids through activation of initiation proteins. This chain is Chaperone protein DnaJ, found in Staphylococcus epidermidis (strain ATCC 35984 / DSM 28319 / BCRC 17069 / CCUG 31568 / BM 3577 / RP62A).